The primary structure comprises 522 residues: Target of rapamycin complex 2 subunit MAPKAP1 (522 aa).

Alanine 2 is modified (N-acetylalanine). The tract at residues alanine 2–histidine 184 is interaction with MAP3K2. Residues alanine 2–lysine 267 are interaction with NBN. Positions leucine 38 to glycine 59 are disordered. At threonine 86 the chain carries Phosphothreonine; by PKB/AKT1 and RPS6KB1. Serine 128 carries the post-translational modification Phosphoserine; by PKC. Residues glutamine 139–lysine 267 form the CRIM domain. Residues serine 186, serine 315, and serine 356 each carry the phosphoserine modification. The segment at leucine 279 to arginine 353 is SIN1-type RBD. Positions histidine 382–glutamate 487 constitute an SIN1-type PH domain. Residue arginine 393 coordinates a 1,2-diacyl-sn-glycero-3-phospho-(1D-myo-inositol-3,4,5-trisphosphate). Threonine 398 is modified (phosphothreonine; by RPS6KB1). A 1,2-diacyl-sn-glycero-3-phospho-(1D-myo-inositol-3,4,5-trisphosphate) is bound by residues lysine 428 and lysine 464. An interaction with ATF2 region spans residues phenylalanine 468–glutamine 522. Phosphoserine is present on serine 510.

The protein belongs to the SIN1 family. In terms of assembly, component of the mechanistic target of rapamycin complex 2 (mTORC2), consisting in two heterotretramers composed of MTOR, MLST8, RICTOR and MAPKAP1/SIN1. The mTORC2 core complex associates with PRR5/PROTOR1 and/or PRR5L/PROTOR2. Contrary to mTORC1, mTORC2 does not bind to and is not sensitive to FKBP12-rapamycin. Interacts with MAP3K2. Interacts with ATF2. Interacts with MAPK8. Interacts with GTP-bound HRAS and KRAS; inhibiting their activity. Interacts with IFNAR2. In terms of processing, phosphorylation at Ser-128 by PKC promotes relocalization to the perinuclear region, where the mTORC2 complex specifically mediates phosphorylation of SGK1. Phosphorylated at Thr-86 by AKT1 or RPS6KB1 in the presence of growth factors; the effect of this phosphorylation is however unclear. According to two studies, phosphorylation at Thr-86 by AKT1 is part of a positive feedback loop that increases mTORC2 activation. According to another study, phosphorylation at Thr-86 and Thr-398 by RPS6KB1 promotes dissociation from the mTORC2 complex, leading to inhibit mTORC2 signaling. In terms of tissue distribution, uniquitously expressed, with highest levels in testis, kidney and liver. Present in renal tubule cells (at protein level).

The protein resides in the cell membrane. It localises to the endoplasmic reticulum membrane. Its subcellular location is the early endosome membrane. The protein localises to the late endosome membrane. It is found in the lysosome membrane. The protein resides in the golgi apparatus membrane. It localises to the mitochondrion outer membrane. Its subcellular location is the cytoplasm. The protein localises to the perinuclear region. It is found in the nucleus. Its activity is regulated as follows. Phosphatidylinositol 3,4,5-trisphosphate (PI(3,4,5)P3) promotes MTOR activation by relieving MAPKAP1/SIN1-mediated inhibition of MTOR that takes place in absence of PI(3,4,5)P3. Its function is as follows. Component of the mechanistic target of rapamycin complex 2 (mTORC2), which transduces signals from growth factors to pathways involved in proliferation, cytoskeletal organization, lipogenesis and anabolic output. In response to growth factors, mTORC2 phosphorylates and activates AGC protein kinase family members, including AKT (AKT1, AKT2 and AKT3), PKC (PRKCA, PRKCB and PRKCE) and SGK1. In contrast to mTORC1, mTORC2 is nutrient-insensitive. Within the mTORC2 complex, MAPKAP1/SIN1 acts as a substrate adapter which recognizes and binds AGC protein kinase family members for phosphorylation by MTOR. mTORC2 plays a critical role in AKT1 activation by mediating phosphorylation of different sites depending on the context, such as 'Thr-450', 'Ser-473', 'Ser-477' or 'Thr-479', facilitating the phosphorylation of the activation loop of AKT1 on 'Thr-308' by PDPK1/PDK1 which is a prerequisite for full activation. mTORC2 catalyzes the phosphorylation of SGK1 at 'Ser-422' and of PRKCA on 'Ser-657'. The mTORC2 complex also phosphorylates various proteins involved in insulin signaling, such as FBXW8 and IGF2BP1. mTORC2 acts upstream of Rho GTPases to regulate the actin cytoskeleton, probably by activating one or more Rho-type guanine nucleotide exchange factors. mTORC2 promotes the serum-induced formation of stress-fibers or F-actin. MAPKAP1 inhibits MAP3K2 by preventing its dimerization and autophosphorylation. Inhibits HRAS and KRAS independently of mTORC2 complex. Enhances osmotic stress-induced phosphorylation of ATF2 and ATF2-mediated transcription. Involved in ciliogenesis, regulates cilia length through its interaction with CCDC28B independently of mTORC2 complex. This Mus musculus (Mouse) protein is Target of rapamycin complex 2 subunit MAPKAP1.